The sequence spans 561 residues: Lanosterol 14-alpha demethylase (561 aa).

Heme is bound at residue Cys501.

The protein belongs to the cytochrome P450 family. Heme is required as a cofactor.

It is found in the membrane. The enzyme catalyses a 14alpha-methyl steroid + 3 reduced [NADPH--hemoprotein reductase] + 3 O2 = a Delta(14) steroid + formate + 3 oxidized [NADPH--hemoprotein reductase] + 4 H2O + 4 H(+). It catalyses the reaction a 14alpha-methyl steroid + reduced [NADPH--hemoprotein reductase] + O2 = a 14alpha-hydroxymethyl steroid + oxidized [NADPH--hemoprotein reductase] + H2O + H(+). It carries out the reaction a 14alpha-hydroxymethyl steroid + reduced [NADPH--hemoprotein reductase] + O2 = a 14alpha-formyl steroid + oxidized [NADPH--hemoprotein reductase] + 2 H2O + H(+). The catalysed reaction is a 14alpha-formyl steroid + reduced [NADPH--hemoprotein reductase] + O2 = a Delta(14) steroid + formate + oxidized [NADPH--hemoprotein reductase] + H2O + 2 H(+). The enzyme catalyses lanosterol + 3 reduced [NADPH--hemoprotein reductase] + 3 O2 = 4,4-dimethyl-5alpha-cholesta-8,14,24-trien-3beta-ol + formate + 3 oxidized [NADPH--hemoprotein reductase] + 4 H2O + 4 H(+). It catalyses the reaction lanosterol + reduced [NADPH--hemoprotein reductase] + O2 = 32-hydroxylanosterol + oxidized [NADPH--hemoprotein reductase] + H2O + H(+). It carries out the reaction 32-hydroxylanosterol + reduced [NADPH--hemoprotein reductase] + O2 = 32-oxolanosterol + oxidized [NADPH--hemoprotein reductase] + 2 H2O + H(+). The catalysed reaction is 32-oxolanosterol + reduced [NADPH--hemoprotein reductase] + O2 = 4,4-dimethyl-5alpha-cholesta-8,14,24-trien-3beta-ol + formate + oxidized [NADPH--hemoprotein reductase] + H2O + 2 H(+). The enzyme catalyses eburicol + 3 reduced [NADPH--hemoprotein reductase] + 3 O2 = 14-demethyleburicol + formate + 3 oxidized [NADPH--hemoprotein reductase] + 4 H2O + 4 H(+). It catalyses the reaction eburicol + reduced [NADPH--hemoprotein reductase] + O2 = 32-hydroxyeburicol + oxidized [NADPH--hemoprotein reductase] + H2O + H(+). It carries out the reaction 32-hydroxyeburicol + reduced [NADPH--hemoprotein reductase] + O2 = 32-oxoeburicol + oxidized [NADPH--hemoprotein reductase] + 2 H2O + H(+). The catalysed reaction is 32-oxoeburicol + reduced [NADPH--hemoprotein reductase] + O2 = 14-demethyleburicol + formate + oxidized [NADPH--hemoprotein reductase] + H2O + 2 H(+). It participates in steroid biosynthesis; zymosterol biosynthesis; zymosterol from lanosterol: step 1/6. Its function is as follows. Sterol 14alpha-demethylase that plays a critical role in the third module of ergosterol biosynthesis pathway, being ergosterol the major sterol component in fungal membranes that participates in a variety of functions. The third module or late pathway involves the ergosterol synthesis itself through consecutive reactions that mainly occur in the endoplasmic reticulum (ER) membrane. In filamentous fungi, during the initial step of this module, lanosterol (lanosta-8,24-dien-3beta-ol) can be metabolized to eburicol. Sterol 14alpha-demethylase catalyzes the three-step oxidative removal of the 14alpha-methyl group (C-32) of both these sterols in the form of formate, and converts eburicol and lanosterol to 14-demethyleburicol (4,4,24-trimethylergosta-8,14,24(28)-trienol) and 4,4-dimethyl-5alpha-cholesta-8,14,24-trien-3beta-ol, respectively, which are further metabolized by other enzymes in the pathway to ergosterol. Can also use substrates not intrinsic to fungi, such as 24,25-dihydrolanosterol (DHL), producing 4,4-dimethyl-8,14-cholestadien-3-beta-ol, but at lower rates than the endogenous substrates. The protein is Lanosterol 14-alpha demethylase (ERG11) of Mycosarcoma maydis (Corn smut fungus).